The primary structure comprises 203 residues: Large ribosomal subunit protein uL13 (203 aa).

The residue at position 2 (A2) is an N-acetylalanine. At R59 the chain carries Citrulline. At S77 the chain carries Phosphoserine. A Citrulline modification is found at R140. At K191 the chain carries N6-acetyllysine.

Belongs to the universal ribosomal protein uL13 family. As to quaternary structure, component of the 60S ribosome. Component of the GAIT complex. Interacts with EIF4G1. In terms of processing, phosphorylation at Ser-77 upon interferon-gamma treatment in monocytes involves a DAPK1-DAPK3 kinase cascade and is causing release from the ribosome, association with the GAIT complex and subsequent involvement in transcript-selective translation inhibition. Post-translationally, citrullinated by PADI4.

It is found in the cytoplasm. Associated with ribosomes but is not required for canonical ribosome function and has extra-ribosomal functions. Component of the GAIT (gamma interferon-activated inhibitor of translation) complex which mediates interferon-gamma-induced transcript-selective translation inhibition in inflammation processes. Upon interferon-gamma activation and subsequent phosphorylation dissociates from the ribosome and assembles into the GAIT complex which binds to stem loop-containing GAIT elements in the 3'-UTR of diverse inflammatory mRNAs (such as ceruplasmin) and suppresses their translation. In the GAIT complex interacts with m7G cap-bound eIF4G at or near the eIF3-binding site and blocks the recruitment of the 43S ribosomal complex. Involved in methylation of rRNA. The chain is Large ribosomal subunit protein uL13 (RPL13A) from Oryctolagus cuniculus (Rabbit).